The following is a 328-amino-acid chain: Methionine import ATP-binding protein MetN 1 (328 aa).

In terms of domain architecture, ABC transporter spans 2 to 241 (ISIERLSKTY…PLSRLGRSLL (240 aa)). 38 to 45 (GRSGAGKS) lines the ATP pocket.

It belongs to the ABC transporter superfamily. Methionine importer (TC 3.A.1.24) family. In terms of assembly, the complex is composed of two ATP-binding proteins (MetN), two transmembrane proteins (MetI) and a solute-binding protein (MetQ).

It localises to the cell inner membrane. The enzyme catalyses L-methionine(out) + ATP + H2O = L-methionine(in) + ADP + phosphate + H(+). It carries out the reaction D-methionine(out) + ATP + H2O = D-methionine(in) + ADP + phosphate + H(+). Part of the ABC transporter complex MetNIQ involved in methionine import. Responsible for energy coupling to the transport system. This chain is Methionine import ATP-binding protein MetN 1, found in Yersinia pestis bv. Antiqua (strain Nepal516).